We begin with the raw amino-acid sequence, 445 residues long: Arginine/agmatine antiporter (445 aa).

At 1-12 (MSSDADAHKVGL) the chain is on the cytoplasmic side. Residues 13–24 (IPVTLMVSGNIM) traverse the membrane as a helical segment. 3 residues coordinate L-arginine: I23, S26, and G27. The short motif at 25–27 (GSG) is the Helix-breaking GSG motif TM1 element. The Periplasmic portion of the chain corresponds to 25–42 (GSGVFLLPANLASTGGIA). The chain crosses the membrane as a helical span at residues 43-61 (IYGWLVTIIGALGLSMVYA). The Cytoplasmic segment spans residues 62-86 (KMSFLDPSPGGSYAYARRCFGPFLG). A helical membrane pass occupies residues 87–112 (YQTNVLYWLACWIGNIAMVVIGVGYL). L-arginine contacts are provided by A96, C97, and N101. Topologically, residues 113–124 (SYFFPILKDPLV) are periplasmic. The chain crosses the membrane as a helical span at residues 125 to 142 (LTITCVVVLWIFVLLNIV). Position 143 (G143) is a topological domain, cytoplasmic. The helical transmembrane segment at 144-171 (PKMITRVQAVATVLALIPIVGIAVFGWF) threads the bilayer. Topologically, residues 172–194 (WFRGETYMAAWNVSGLGTFGAIQ) are periplasmic. The chain crosses the membrane as a helical span at residues 195-207 (STLNVTLWSFIGV). Residues W202 and I205 each contribute to the L-arginine site. Residues 206 to 210 (GVESA) carry the Helix-breaking GVESA motif TM6 motif. At 208–226 (ESASVAAGVVKNPKRNVPI) the chain is on the cytoplasmic side. A helical transmembrane segment spans residues 227–247 (ATIGGVLIAAVCYVLSTTAIM). At 248–277 (GMIPNAALRVSASPFGDAARMALGDTAGAI) the chain is on the periplasmic side. A helical membrane pass occupies residues 278 to 301 (VSFCAAAGCLGSLGGWTLLAGQTA). W293 contributes to the L-arginine binding site. The Cytoplasmic portion of the chain corresponds to 302 to 323 (KAAADDGLFPPIFARVNKAGTP). A helical transmembrane segment spans residues 324-340 (VAGLIIVGILMTIFQLS). The Periplasmic segment spans residues 341 to 352 (SISPNATKEFGL). A helical membrane pass occupies residues 353–370 (VSSVSVIFTLVPYLYTCA). S357 lines the L-arginine pocket. At 371-388 (ALLLLGHGHFGKARPAYL) the chain is on the cytoplasmic side. Residues 389–404 (AVTTIAFLYCIWAVVG) form a helical membrane-spanning segment. Over 405–407 (SGA) the chain is Periplasmic. Residues 408–426 (KEVMWSFVTLMVITAMYAL) traverse the membrane as a helical segment. The Cytoplasmic segment spans residues 427–445 (NYNRLHKNPYPLDAPISKD).

It belongs to the amino acid-polyamine-organocation (APC) superfamily. Basic amino acid/polyamine antiporter (APA) (TC 2.A.3.2) family. In terms of assembly, homodimer;each subunit has its own individual transport capacity.

The protein localises to the cell inner membrane. The catalysed reaction is agmatine(in) + L-arginine(out) = agmatine(out) + L-arginine(in). Its function is as follows. Major component of the acid-resistance (AR) system allowing enteric pathogens to survive the acidic environment in the stomach. Exchanges extracellular arginine for its intracellular decarboxylation product agmatine (Agm) thereby expelling intracellular protons. Probably undergoes several conformational states in order to translocate the substrate across the membrane; keeps the substrate accessible to only 1 side of the membrane at a time by opening and closing 3 membrane-internal gates. The protein is Arginine/agmatine antiporter (adiC) of Escherichia coli O157:H7.